A 394-amino-acid polypeptide reads, in one-letter code: MTTAQTQELDVQPTPLALLLLGREADPRSERGVECPGDLPSPSDPDLVARARAAKEKLGDKVFVLGHHYQRDEVIQFADVTGDSFKLARDAAARPEAEYIVFCGVHFMAESADILTSNDQKVVLPDLAAGCSMADMATAEQVAECWDVLTEAGIAEQVVPVSYMNSSADIKAFTGKHGGTICTSSNAERALNWAFEQGEKVLFLPDQHLGRNTAVRDLGMSLEDCVVYNPHRPNGGLTAKELRDANMILWRGHCSVHGRFSLDSVNDVRERIPGVNVLVHPECKHEVVAAADYVGSTEYIIKALEAAPAGSKWAIGTELNLVRRLANRFAAEDKEIVFLDKTVCFCSTMNRIDLPHLVWTLESLAEGTLVNRIEVDQETEAFAKLALERMLALP.

The iminosuccinate site is built by H67 and S84. Residue C131 participates in [4Fe-4S] cluster binding. Residues 163–165 (YMN) and S184 contribute to the iminosuccinate site. Residue C254 participates in [4Fe-4S] cluster binding. Residues 280-282 (HPE) and T297 each bind iminosuccinate. C346 contributes to the [4Fe-4S] cluster binding site.

The protein belongs to the quinolinate synthase family. Type 3 subfamily. [4Fe-4S] cluster serves as cofactor.

The protein localises to the cytoplasm. It carries out the reaction iminosuccinate + dihydroxyacetone phosphate = quinolinate + phosphate + 2 H2O + H(+). It participates in cofactor biosynthesis; NAD(+) biosynthesis; quinolinate from iminoaspartate: step 1/1. Catalyzes the condensation of iminoaspartate with dihydroxyacetone phosphate to form quinolinate. The protein is Quinolinate synthase of Streptomyces coelicolor (strain ATCC BAA-471 / A3(2) / M145).